The following is a 326-amino-acid chain: MSNAYPDKHLKLFSLTSNTAIAEKIAKVVGVPLGKLSSRQFSDGEIMINIEESVRGNDIYVIQSTSYPVNNHLWELLIMVDACKRASANSVNVVIPYFGYSRQDRIAAAREPITAKLVANMLVKAGVDRVLTLDLHAVQVQGFFDIPVDNLFTTPLFADHYTNLGLYGEDIVVVSPKNSGIKRARSLAQYLDAPIAIIDYAQDDDSSREEGYIIGEVAGKKAILIDDILNTGKTFAESAKIVERGGATEIYAVASHGLFASGATEILQAAPIKDILITDSVYTEQELPSNLHYLSASELIGEAIIRIHERRPVSPLFAYNRKGDEA.

Residues 43–45 and 102–103 contribute to the ATP site; these read DGE and RQ. Mg(2+) is bound at residue His-136. Residues Asp-226 and 230–234 each bind D-ribose 5-phosphate; that span reads NTGKT.

The protein belongs to the ribose-phosphate pyrophosphokinase family. Class I subfamily. Homohexamer. Mg(2+) is required as a cofactor.

It is found in the cytoplasm. It catalyses the reaction D-ribose 5-phosphate + ATP = 5-phospho-alpha-D-ribose 1-diphosphate + AMP + H(+). The protein operates within metabolic intermediate biosynthesis; 5-phospho-alpha-D-ribose 1-diphosphate biosynthesis; 5-phospho-alpha-D-ribose 1-diphosphate from D-ribose 5-phosphate (route I): step 1/1. In terms of biological role, involved in the biosynthesis of the central metabolite phospho-alpha-D-ribosyl-1-pyrophosphate (PRPP) via the transfer of pyrophosphoryl group from ATP to 1-hydroxyl of ribose-5-phosphate (Rib-5-P). The chain is Putative ribose-phosphate pyrophosphokinase 2 from Streptococcus mutans serotype c (strain ATCC 700610 / UA159).